Consider the following 381-residue polypeptide: tRNA (guanine(26)-N(2))-dimethyltransferase (381 aa).

The Trm1 methyltransferase domain occupies 7-378 (IEVQEGKAKI…APYEVFIETI (372 aa)). Residues Arg-39, Arg-64, Asp-81, Asp-123, and Ala-124 each coordinate S-adenosyl-L-methionine.

Belongs to the class I-like SAM-binding methyltransferase superfamily. Trm1 family.

The enzyme catalyses guanosine(26) in tRNA + 2 S-adenosyl-L-methionine = N(2)-dimethylguanosine(26) in tRNA + 2 S-adenosyl-L-homocysteine + 2 H(+). Dimethylates a single guanine residue at position 26 of a number of tRNAs using S-adenosyl-L-methionine as donor of the methyl groups. The polypeptide is tRNA (guanine(26)-N(2))-dimethyltransferase (Pyrococcus horikoshii (strain ATCC 700860 / DSM 12428 / JCM 9974 / NBRC 100139 / OT-3)).